A 316-amino-acid polypeptide reads, in one-letter code: Acetyl-coenzyme A carboxylase carboxyl transferase subunit alpha (316 aa).

One can recognise a CoA carboxyltransferase C-terminal domain in the interval 40-293 (LERRSKDALR…GETIENGFRE (254 aa)).

Belongs to the AccA family. Acetyl-CoA carboxylase is a heterohexamer composed of biotin carboxyl carrier protein (AccB), biotin carboxylase (AccC) and two subunits each of ACCase subunit alpha (AccA) and ACCase subunit beta (AccD).

It is found in the cytoplasm. It catalyses the reaction N(6)-carboxybiotinyl-L-lysyl-[protein] + acetyl-CoA = N(6)-biotinyl-L-lysyl-[protein] + malonyl-CoA. The protein operates within lipid metabolism; malonyl-CoA biosynthesis; malonyl-CoA from acetyl-CoA: step 1/1. Component of the acetyl coenzyme A carboxylase (ACC) complex. First, biotin carboxylase catalyzes the carboxylation of biotin on its carrier protein (BCCP) and then the CO(2) group is transferred by the carboxyltransferase to acetyl-CoA to form malonyl-CoA. The polypeptide is Acetyl-coenzyme A carboxylase carboxyl transferase subunit alpha (Chelativorans sp. (strain BNC1)).